The sequence spans 363 residues: MTCQAFASSDNFVPLNSDSSPSLPLIMHHSAGECLPVSNHATNVVSTVPSVLSLIQTPKCSHFHFAMMTSGNVSAGLHYSVPSCHYGNQASTYGVMAGIKPATPEMLSASLSQSRILQTCSMPHPNVVNGVSTLQSSLTPCLYKFPEHALSASSCALGHSFTPMHQTLLSDDPTASDFKQEFRRKSKSVEEPVDMDSPEIRELEKFANEFKLRRIKLGYTQTNVGEALAAVHGSEFSQTTICRFENLQLSFKNACKLKSILSKWLEEAEQVGALYNEKVGVNERKRKRRTTISISAKEALERHFGEQSKPSSQEIMRMAEGLNLEKEVVRVWFCNRRQREKRVKTSLHQNAFSSIIKEHHECR.

A 9aaTAD motif is present at residues 5 to 13; the sequence is AFASSDNFV. The 75-residue stretch at 195 to 269 folds into the POU-specific domain; it reads MDSPEIRELE…ILSKWLEEAE (75 aa). The segment at residues 285 to 344 is a DNA-binding region (homeobox); the sequence is KRKRRTTISISAKEALERHFGEQSKPSSQEIMRMAEGLNLEKEVVRVWFCNRRQREKRVK.

The protein belongs to the POU transcription factor family. Class-1 subfamily. Pituitary gland.

The protein localises to the nucleus. Its function is as follows. Transcription factor that activates growth hormone and prolactin genes. Specifically binds to the consensus sequence 5'-TAAAT-3'. In Gallus gallus (Chicken), this protein is Pituitary-specific positive transcription factor 1 (POU1F1).